A 235-amino-acid polypeptide reads, in one-letter code: Small ribosomal subunit protein uS3 (235 aa).

Residues 39 to 107 enclose the KH type-2 domain; that stretch reads VRKFLNKELA…PAQINIAEVK (69 aa).

It belongs to the universal ribosomal protein uS3 family. As to quaternary structure, part of the 30S ribosomal subunit. Forms a tight complex with proteins S10 and S14.

Binds the lower part of the 30S subunit head. Binds mRNA in the 70S ribosome, positioning it for translation. This is Small ribosomal subunit protein uS3 from Mannheimia succiniciproducens (strain KCTC 0769BP / MBEL55E).